A 424-amino-acid chain; its full sequence is Tubulin gamma chain, nucleomorph (424 aa).

Position 137–143 (137–143 (NGGTGAG)) interacts with GTP.

Belongs to the tubulin family.

Functionally, tubulin is the major constituent of microtubules. The gamma chain is found at microtubule organizing centers (MTOC) such as the spindle poles or the centrosome, suggesting that it is involved in the minus-end nucleation of microtubule assembly. The sequence is that of Tubulin gamma chain, nucleomorph (tubG) from Guillardia theta (Cryptophyte).